A 119-amino-acid polypeptide reads, in one-letter code: Large ribosomal subunit protein bL20 (119 aa).

It belongs to the bacterial ribosomal protein bL20 family.

Its function is as follows. Binds directly to 23S ribosomal RNA and is necessary for the in vitro assembly process of the 50S ribosomal subunit. It is not involved in the protein synthesizing functions of that subunit. The sequence is that of Large ribosomal subunit protein bL20 from Streptococcus equi subsp. equi (strain 4047).